The following is a 438-amino-acid chain: Probable phosphoglucosamine mutase (438 aa).

Serine 91 (phosphoserine intermediate) is an active-site residue. Mg(2+) contacts are provided by serine 91, aspartate 228, aspartate 230, and aspartate 232. Position 91 is a phosphoserine (serine 91).

The protein belongs to the phosphohexose mutase family. It depends on Mg(2+) as a cofactor. In terms of processing, activated by phosphorylation.

It catalyses the reaction alpha-D-glucosamine 1-phosphate = D-glucosamine 6-phosphate. In terms of biological role, catalyzes the conversion of glucosamine-6-phosphate to glucosamine-1-phosphate. The chain is Probable phosphoglucosamine mutase from Methanocella arvoryzae (strain DSM 22066 / NBRC 105507 / MRE50).